The sequence spans 321 residues: Phospho-N-acetylmuramoyl-pentapeptide-transferase (321 aa).

Transmembrane regions (helical) follow at residues 4 to 24 (MVWA…WLIP), 51 to 71 (TMGG…TVGF), 75 to 95 (SGVL…DDYI), 109 to 129 (QKFT…VYGI), 139 to 159 (GFEV…LLIV), 173 to 193 (GLAA…ASAG), 195 to 215 (SDVT…FLFF), 222 to 242 (MFMG…LALL), 247 to 267 (LILP…ILQV), and 297 to 317 (VVYT…LLAM).

Belongs to the glycosyltransferase 4 family. MraY subfamily. Mg(2+) is required as a cofactor.

It localises to the cell membrane. It catalyses the reaction UDP-N-acetyl-alpha-D-muramoyl-L-alanyl-gamma-D-glutamyl-meso-2,6-diaminopimeloyl-D-alanyl-D-alanine + di-trans,octa-cis-undecaprenyl phosphate = di-trans,octa-cis-undecaprenyl diphospho-N-acetyl-alpha-D-muramoyl-L-alanyl-D-glutamyl-meso-2,6-diaminopimeloyl-D-alanyl-D-alanine + UMP. Its pathway is cell wall biogenesis; peptidoglycan biosynthesis. Functionally, catalyzes the initial step of the lipid cycle reactions in the biosynthesis of the cell wall peptidoglycan: transfers peptidoglycan precursor phospho-MurNAc-pentapeptide from UDP-MurNAc-pentapeptide onto the lipid carrier undecaprenyl phosphate, yielding undecaprenyl-pyrophosphoryl-MurNAc-pentapeptide, known as lipid I. The sequence is that of Phospho-N-acetylmuramoyl-pentapeptide-transferase from Heliobacterium modesticaldum (strain ATCC 51547 / Ice1).